The chain runs to 464 residues: MILANVFCLFFFLDETLRSLASPSSLQGPELHGWRPPVDCVRANELCAAESNCSSRYRTLRQCLAGRDRNTMLANKECQAALEVLQESPLYDCRCKRGMKKELQCLQIYWSIHLGLTEGEEFYEASPYEPVTSRLSDIFRLASIFSGTGADPVVSAKSNHCLDAAKACNLNDNCKKLRSSYISICNREISPTERCNRRKCHKALRQFFDRVPSEYTYRMLFCSCQDQACAERRRQTILPSCSYEDKEKPNCLDLRGVCRTDHLCRSRLADFHANCRASYQTVTSCPADNYQACLGSYAGMIGFDMTPNYVDSSPTGIVVSPWCSCRGSGNMEEECEKFLRDFTENPCLRNAIQAFGNGTDVNVSPKGPLFQATQAPRAEKTPSLPDDLSDSTSLGTSVITTCTSVQEQGLKANNSKELSMCFTELTTNIIPGSNKVIKPNSGPSRARPSAALTVLSVLMLKLAL.

Positions 1-21 (MILANVFCLFFFLDETLRSLA) are cleaved as a signal peptide. Intrachain disulfides connect cysteine 40/cysteine 93, cysteine 47/cysteine 53, cysteine 63/cysteine 78, cysteine 95/cysteine 105, cysteine 161/cysteine 222, cysteine 168/cysteine 174, cysteine 185/cysteine 200, cysteine 195/cysteine 241, cysteine 224/cysteine 229, cysteine 251/cysteine 323, cysteine 258/cysteine 264, cysteine 275/cysteine 293, cysteine 285/cysteine 347, and cysteine 325/cysteine 335. Asparagine 52 carries N-linked (GlcNAc...) asparagine glycosylation. N-linked (GlcNAc...) asparagine glycosylation is found at asparagine 357 and asparagine 413. Serine 444 carries GPI-anchor amidated serine lipidation. Residues 445–464 (RARPSAALTVLSVLMLKLAL) constitute a propeptide, removed in mature form.

The protein belongs to the GDNFR family. In terms of assembly, interacts with NRTN ligand and RET: forms a 2:2:2 ternary complex composed of NRTN ligand, GFRA2 and RET receptor. Also forms a 4:4:4 tetrameric complex composed of 4 copies of NRTN ligand, GFRA2 and RET receptor, which prevents endocytosis of RET. Interacts with SORL1.

The protein localises to the cell membrane. Its function is as follows. Receptor for neurturin (NRTN), a growth factor that supports the survival of sympathetic neurons. NRTN-binding leads to autophosphorylation and activation of the RET receptor. Also able to mediate GDNF signaling through the RET tyrosine kinase receptor. The polypeptide is GDNF family receptor alpha-2 (GFRA2) (Pongo abelii (Sumatran orangutan)).